A 431-amino-acid chain; its full sequence is Sulfide dehydrogenase [flavocytochrome c] flavoprotein chain (431 aa).

Positions 1–30 form a signal peptide, tat-type signal; the sequence is MTLNRRDFIKTSGAAVAAVGILGFPHLAFG. 70 to 76 lines the FAD pocket; sequence YTCYLSN. A disulfide bridge links Cys-191 with Cys-367.

As to quaternary structure, dimer of one cytochrome and one flavoprotein. In terms of processing, predicted to be exported by the Tat system. The position of the signal peptide cleavage has been experimentally proven.

The protein localises to the periplasm. It catalyses the reaction hydrogen sulfide + 2 Fe(III)-[cytochrome c] = sulfur + 2 Fe(II)-[cytochrome c] + H(+). The sequence is that of Sulfide dehydrogenase [flavocytochrome c] flavoprotein chain (fccB) from Allochromatium vinosum (strain ATCC 17899 / DSM 180 / NBRC 103801 / NCIMB 10441 / D) (Chromatium vinosum).